The sequence spans 473 residues: GDP-fucose protein O-fucosyltransferase 2 (473 aa).

The N-terminal stretch at 1–25 is a signal peptide; the sequence is MKNMIYNLISISLYSLIIILTDIYA. GDP-beta-L-fucose is bound by residues 59 to 63, 283 to 285, and 379 to 380; these read GEGFN, HLR, and RF. Residue E60 is the Proton acceptor of the active site.

The protein belongs to the glycosyltransferase 68 family.

It is found in the endoplasmic reticulum. The catalysed reaction is L-seryl-[protein] + GDP-beta-L-fucose = 3-O-(alpha-L-fucosyl)-L-seryl-[protein] + GDP + H(+). The enzyme catalyses L-threonyl-[protein] + GDP-beta-L-fucose = 3-O-(alpha-L-fucosyl)-L-threonyl-[protein] + GDP + H(+). It functions in the pathway protein modification; protein glycosylation. Its function is as follows. Catalyzes the reaction that attaches fucose through an O-glycosidic linkage to a conserved serine or threonine residue in the consensus sequence C1-X-X-S/T-C2 of thrombospondin type I repeats (TSRs) where C1 and C2 are the first and second cysteines of the repeat, respectively. O-fucosylates sporozoite proteins CSP and TRAP. O-fucosylation regulates stability and intracellular trafficking of TRAP but not of CSP. Dispensable for parasite transmission to the mosquito vector and/or infection of the vertebrate host hepatocytes. The chain is GDP-fucose protein O-fucosyltransferase 2 from Plasmodium berghei (strain Anka).